Reading from the N-terminus, the 876-residue chain is ATPase WRNIP1 (876 aa).

Composition is skewed to low complexity over residues Asn-56–Lys-85 and Asn-104–Asn-175. The tract at residues Asn-56–Asn-175 is disordered. An ATP-binding site is contributed by Pro-240–Thr-246. Disordered regions lie at residues Lys-621–Gln-647, Ile-714–Thr-737, and Glu-833–Phe-876. 2 stretches are compositionally biased toward low complexity: residues Ser-626–Gln-647 and Ile-714–Ser-731. The segment covering Lys-835–Asn-849 has biased composition (polar residues). Residues Asp-850 to Gln-863 are compositionally biased toward basic and acidic residues.

It belongs to the AAA ATPase family. RarA/MGS1/WRNIP1 subfamily.

The protein localises to the nucleus. It carries out the reaction ATP + H2O = ADP + phosphate + H(+). Functions as a modulator for initiation or reinitiation events during DNA polymerase delta-mediated DNA synthesis. Has an intrinsic ATPase activity that functions as a sensor of DNA damage or of arrested replication forks and regulates the extent of DNA synthesis. This is ATPase WRNIP1 from Dictyostelium discoideum (Social amoeba).